The primary structure comprises 399 residues: S-adenosylmethionine synthase (399 aa).

An ATP-binding site is contributed by His15. Asp17 is a Mg(2+) binding site. Position 43 (Glu43) interacts with K(+). Residues Glu56 and Gln99 each contribute to the L-methionine site. Residues 99-109 (QSADIAQGVDN) are flexible loop. Residues 174-176 (DGK), 244-245 (RF), Asp253, 259-260 (RK), Ala276, and Lys280 each bind ATP. An L-methionine-binding site is contributed by Asp253. Lys284 is an L-methionine binding site.

The protein belongs to the AdoMet synthase family. As to quaternary structure, homotetramer; dimer of dimers. Mg(2+) serves as cofactor. Requires K(+) as cofactor.

It localises to the cytoplasm. The catalysed reaction is L-methionine + ATP + H2O = S-adenosyl-L-methionine + phosphate + diphosphate. The protein operates within amino-acid biosynthesis; S-adenosyl-L-methionine biosynthesis; S-adenosyl-L-methionine from L-methionine: step 1/1. Catalyzes the formation of S-adenosylmethionine (AdoMet) from methionine and ATP. The overall synthetic reaction is composed of two sequential steps, AdoMet formation and the subsequent tripolyphosphate hydrolysis which occurs prior to release of AdoMet from the enzyme. The sequence is that of S-adenosylmethionine synthase from Salinispora arenicola (strain CNS-205).